The sequence spans 175 residues: MAPSVMASSATTVAPFQGLKSTAGMPVARRSGNSSFGNVSNGGRIRCMQVWPIEGIKKFETLSYLPPLTVEDLLKQIEYLLRSKWVPCLEFSKVGFVYRENHRSPGYYDGRYWTMWKLPMFGCTDATQVLKELEEAKKAYPDAFVRIIGFDNVRQVQLISFIAYKPPGCEESGGN.

The N-terminal 46 residues, 1–46, are a transit peptide targeting the chloroplast; that stretch reads MAPSVMASSATTVAPFQGLKSTAGMPVARRSGNSSFGNVSNGGRIR. Positions 60-64 are interaction with large subunit; sequence ETLSY.

This sequence belongs to the RuBisCO small chain family. As to quaternary structure, heterohexadecamer of 8 large and 8 small subunits.

The protein resides in the plastid. It localises to the chloroplast. Its function is as follows. RuBisCO catalyzes two reactions: the carboxylation of D-ribulose 1,5-bisphosphate, the primary event in carbon dioxide fixation, as well as the oxidative fragmentation of the pentose substrate. Both reactions occur simultaneously and in competition at the same active site. Although the small subunit is not catalytic it is essential for maximal activity. This is Ribulose bisphosphate carboxylase small subunit, chloroplastic from Oryza sativa subsp. indica (Rice).